Consider the following 92-residue polypeptide: Small ribosomal subunit protein uS19 (92 aa).

This sequence belongs to the universal ribosomal protein uS19 family.

Its function is as follows. Protein S19 forms a complex with S13 that binds strongly to the 16S ribosomal RNA. The polypeptide is Small ribosomal subunit protein uS19 (Enterococcus faecalis (strain ATCC 700802 / V583)).